A 288-amino-acid polypeptide reads, in one-letter code: DegV domain-containing protein SAS0714 (288 aa).

The DegV domain occupies 3–282 (IAVMTDSTSY…SGGLGLGYVG (280 aa)). Residues Thr-62 and Ser-95 each coordinate hexadecanoate.

Its function is as follows. May bind long-chain fatty acids, such as palmitate, and may play a role in lipid transport or fatty acid metabolism. The polypeptide is DegV domain-containing protein SAS0714 (Staphylococcus aureus (strain MSSA476)).